The following is a 169-amino-acid chain: uncharacterized protein (169 aa).

The 130-residue stretch at 28–157 (ELHLVVHVCI…EFIPYFFLNQ (130 aa)) folds into the Nudix hydrolase domain. Residues 65–87 (AGSALKGETSRQAAEREVKEELG) carry the Nudix box motif. Mg(2+) contacts are provided by Glu81 and Glu85.

This sequence belongs to the Nudix hydrolase family. Requires Mg(2+) as cofactor.

This is an uncharacterized protein from Listeria innocua serovar 6a (strain ATCC BAA-680 / CLIP 11262).